Reading from the N-terminus, the 208-residue chain is uncharacterized protein (208 aa).

Disordered stretches follow at residues 91–115 (PGQA…PSQD), 127–156 (QSWS…KRPG), and 182–208 (NKLG…RKFK). Residues 127–136 (QSWSSGTSRP) show a composition bias toward polar residues.

This is an uncharacterized protein from Rattus norvegicus (Rat).